We begin with the raw amino-acid sequence, 81 residues long: Neuronatin (81 aa).

Belongs to the neuronatin family.

Functionally, may participate in the maintenance of segment identity in the hindbrain and pituitary development, and maturation or maintenance of the overall structure of the nervous system. May function as a regulatory subunit of ion channels. The chain is Neuronatin (NNAT) from Mesocricetus auratus (Golden hamster).